A 508-amino-acid chain; its full sequence is Transcriptional regulatory protein moc3 (508 aa).

Residues 15–43 form a disordered region; it reads NRTGSINSNPLYIPNPNVEPTPKPTKRRT. The segment at residues 46–76 is a DNA-binding region (zn(2)-C6 fungal-type); the sequence is GCLTCRRRRIKCDETKPFCLNCTKTNRECEG. Disordered stretches follow at residues 110–146 and 174–193; these read ASSS…STVT and NHNV…KPSV. The segment covering 176 to 193 has biased composition (low complexity); the sequence is NVPTNNSSSATSSTKPSV.

Interacts with zfs1.

It is found in the nucleus. Induces sexual development and ascus formation. Also involved in calcium homeostasis. The chain is Transcriptional regulatory protein moc3 (moc3) from Schizosaccharomyces pombe (strain 972 / ATCC 24843) (Fission yeast).